Reading from the N-terminus, the 501-residue chain is GTPase Obg (501 aa).

One can recognise an Obg domain in the interval N2 to M159. An OBG-type G domain is found at A160–Q341. GTP is bound by residues G166–S173, F191–Q195, D212–G215, N292–D295, and S322–V324. Mg(2+)-binding residues include S173 and T193. Positions V362–P442 constitute an OCT domain.

It belongs to the TRAFAC class OBG-HflX-like GTPase superfamily. OBG GTPase family. As to quaternary structure, monomer. It depends on Mg(2+) as a cofactor.

Its subcellular location is the cytoplasm. In terms of biological role, an essential GTPase which binds GTP, GDP and possibly (p)ppGpp with moderate affinity, with high nucleotide exchange rates and a fairly low GTP hydrolysis rate. Plays a role in control of the cell cycle, stress response, ribosome biogenesis and in those bacteria that undergo differentiation, in morphogenesis control. The chain is GTPase Obg from Corynebacterium glutamicum (strain R).